We begin with the raw amino-acid sequence, 258 residues long: Indole-3-glycerol phosphate synthase (258 aa).

The protein belongs to the TrpC family.

It catalyses the reaction 1-(2-carboxyphenylamino)-1-deoxy-D-ribulose 5-phosphate + H(+) = (1S,2R)-1-C-(indol-3-yl)glycerol 3-phosphate + CO2 + H2O. It participates in amino-acid biosynthesis; L-tryptophan biosynthesis; L-tryptophan from chorismate: step 4/5. This Campylobacter jejuni subsp. doylei (strain ATCC BAA-1458 / RM4099 / 269.97) protein is Indole-3-glycerol phosphate synthase.